The primary structure comprises 50 residues: Penaeidin-1 (50 aa).

Cystine bridges form between Cys25/Cys38, Cys27/Cys45, and Cys39/Cys46.

Higher expression in hemocytes and to a lesser extent in heart, testis, gills, intestine, lymphoid organ and hepatopancreas. Traces in eyes and subcuticular epithelium. Not present in the brain.

It localises to the cytoplasmic granule. Antibacterial activity against M.luteus and E.coli bacteria. Antifungal activity against N.crassa and F.oxysporum. Presents chitin-binding activity. The sequence is that of Penaeidin-1 from Penaeus vannamei (Whiteleg shrimp).